The sequence spans 203 residues: Glycerol-3-phosphate acyltransferase (203 aa).

Helical transmembrane passes span 3 to 23 (ILLA…VVVS), 51 to 71 (KAAI…VWLV), 74 to 94 (FGIG…LGHL), 116 to 136 (AVHP…AFFF), 140 to 160 (SLAA…LFGT), and 164 to 178 (PVAW…LLIW).

This sequence belongs to the PlsY family. Probably interacts with PlsX.

It is found in the cell inner membrane. The enzyme catalyses an acyl phosphate + sn-glycerol 3-phosphate = a 1-acyl-sn-glycero-3-phosphate + phosphate. Its pathway is lipid metabolism; phospholipid metabolism. In terms of biological role, catalyzes the transfer of an acyl group from acyl-phosphate (acyl-PO(4)) to glycerol-3-phosphate (G3P) to form lysophosphatidic acid (LPA). This enzyme utilizes acyl-phosphate as fatty acyl donor, but not acyl-CoA or acyl-ACP. The polypeptide is Glycerol-3-phosphate acyltransferase (Burkholderia mallei (strain ATCC 23344)).